The sequence spans 162 residues: Transcription elongation factor GreB (162 aa).

A coiled-coil region spans residues 52 to 73 (KKLLREIDRRVRYLRKRLEDVK).

The protein belongs to the GreA/GreB family. GreB subfamily.

Necessary for efficient RNA polymerase transcription elongation past template-encoded arresting sites. The arresting sites in DNA have the property of trapping a certain fraction of elongating RNA polymerases that pass through, resulting in locked ternary complexes. Cleavage of the nascent transcript by cleavage factors such as GreA or GreB allows the resumption of elongation from the new 3'terminus. GreB releases sequences of up to 9 nucleotides in length. The polypeptide is Transcription elongation factor GreB (Pseudomonas putida (strain ATCC 47054 / DSM 6125 / CFBP 8728 / NCIMB 11950 / KT2440)).